Reading from the N-terminus, the 624-residue chain is Prickle planar cell polarity protein 3 (624 aa).

The segment covering 1–12 (MFARGSRRRRSG) has biased composition (basic residues). Residues 1–26 (MFARGSRRRRSGRAPPEAEDPARGQP) are disordered. Residues 74–182 (SDFQRHSISD…TVRIFPVTIT (109 aa)) enclose the PET domain. LIM zinc-binding domains follow at residues 184 to 249 (AICE…CLRP), 250 to 309 (RCQA…RHAE), and 310 to 373 (YCDG…SETT). Residues 371–617 (ETTAPGPGRR…SHPVMPRQTR (247 aa)) form a disordered region. Low complexity predominate over residues 383–409 (SAGTVTTPLTTSTASFSATEGTSETAS). Residues 447 to 458 (PEPPTESPGHPA) show a composition bias toward pro residues. 2 positions are modified to phosphoserine: S475 and S491. Residues 509–541 (SCHHHHHHRRRRQRHRRRGSHHHHHHPGRHGHH) show a composition bias toward basic residues. The segment covering 545–564 (LGSGSDSGSCSSSPSSPSSE) has biased composition (low complexity). Residues 587-601 (RTTQDTSTETFNSPA) show a composition bias toward polar residues.

Belongs to the prickle / espinas / testin family. Interacts with VANGL2 via its C-terminus. The VANGL2-dependent membrane recruitment of PRICKLE3 is a prerequisite for its polarization. Interacts with WTIP. WTIP is involved in the recruitment of PRICKLE3 to the basal body. Interacts with MT-ATP8, a component of the mitochondrial complex V. As to expression, widely expressed.

It is found in the cytoplasm. The protein resides in the cell membrane. The protein localises to the mitochondrion. Functionally, involved in the planar cell polarity (PCP) pathway that is essential for the polarization of epithelial cells during morphogenetic processes, including gastrulation and neurulation. PCP is maintained by two molecular modules, the global and the core modules, PRICKLE3 being part of the core module. Distinct complexes of the core module segregate to opposite sides of the cell, where they interact with the opposite complex in the neighboring cell at or near the adherents junctions. Involved in the organization of the basal body. Involved in cilia growth and positioning. Required for proper assembly, stability, and function of mitochondrial membrane ATP synthase (mitochondrial complex V). This chain is Prickle planar cell polarity protein 3, found in Mus musculus (Mouse).